A 337-amino-acid polypeptide reads, in one-letter code: Holliday junction branch migration complex subunit RuvB (337 aa).

Residues 1-182 are large ATPase domain (RuvB-L); that stretch reads MEDRMVSASY…FGVLSAMEFY (182 aa). Positions 21, 22, 63, 66, 67, 68, 172, 182, and 219 each coordinate ATP. Threonine 67 contributes to the Mg(2+) binding site. The segment at 183 to 253 is small ATPAse domain (RuvB-S); that stretch reads NEDELKEIIL…IAKNALSLLE (71 aa). Residues 256-337 are head domain (RuvB-H); the sequence is GEGFDKIDNK…REFKEQTKLT (82 aa). Residues arginine 311 and arginine 316 each contribute to the DNA site.

The protein belongs to the RuvB family. As to quaternary structure, homohexamer. Forms an RuvA(8)-RuvB(12)-Holliday junction (HJ) complex. HJ DNA is sandwiched between 2 RuvA tetramers; dsDNA enters through RuvA and exits via RuvB. An RuvB hexamer assembles on each DNA strand where it exits the tetramer. Each RuvB hexamer is contacted by two RuvA subunits (via domain III) on 2 adjacent RuvB subunits; this complex drives branch migration. In the full resolvosome a probable DNA-RuvA(4)-RuvB(12)-RuvC(2) complex forms which resolves the HJ.

It is found in the cytoplasm. It carries out the reaction ATP + H2O = ADP + phosphate + H(+). In terms of biological role, the RuvA-RuvB-RuvC complex processes Holliday junction (HJ) DNA during genetic recombination and DNA repair, while the RuvA-RuvB complex plays an important role in the rescue of blocked DNA replication forks via replication fork reversal (RFR). RuvA specifically binds to HJ cruciform DNA, conferring on it an open structure. The RuvB hexamer acts as an ATP-dependent pump, pulling dsDNA into and through the RuvAB complex. RuvB forms 2 homohexamers on either side of HJ DNA bound by 1 or 2 RuvA tetramers; 4 subunits per hexamer contact DNA at a time. Coordinated motions by a converter formed by DNA-disengaged RuvB subunits stimulates ATP hydrolysis and nucleotide exchange. Immobilization of the converter enables RuvB to convert the ATP-contained energy into a lever motion, pulling 2 nucleotides of DNA out of the RuvA tetramer per ATP hydrolyzed, thus driving DNA branch migration. The RuvB motors rotate together with the DNA substrate, which together with the progressing nucleotide cycle form the mechanistic basis for DNA recombination by continuous HJ branch migration. Branch migration allows RuvC to scan DNA until it finds its consensus sequence, where it cleaves and resolves cruciform DNA. The chain is Holliday junction branch migration complex subunit RuvB from Clostridium novyi (strain NT).